A 233-amino-acid polypeptide reads, in one-letter code: MSEAKNLLAQGLWKNNSALVQLLGLCPLLAVSSTATNALGLGLATTLVLVCTNTAVSALRRWVPSEIRIPIYVMIIASVVSTVQMLINAYAFGLYQSLGIFIPLIVTNCIVIGRAEAYAAKNPVGLSALDGFAMGMGATCALFVLGALREILGNGTLFDGADMLLGSWATVLRIDILHLDTPFLLAMLPPGAFIGLGLLLAGKYVIDEKMKARKANTRVSVPQLQDGYAEKAL.

6 helical membrane-spanning segments follow: residues 18-38 (ALVQLLGLCPLLAVSSTATNA), 39-59 (LGLGLATTLVLVCTNTAVSAL), 69-89 (IPIYVMIIASVVSTVQMLINA), 92-112 (FGLYQSLGIFIPLIVTNCIVI), 128-148 (ALDGFAMGMGATCALFVLGAL), and 182-202 (PFLLAMLPPGAFIGLGLLLAG).

This sequence belongs to the NqrDE/RnfAE family. In terms of assembly, the complex is composed of six subunits: RnfA, RnfB, RnfC, RnfD, RnfE and RnfG.

Its subcellular location is the cell inner membrane. In terms of biological role, part of a membrane-bound complex that couples electron transfer with translocation of ions across the membrane. The protein is Ion-translocating oxidoreductase complex subunit E of Yersinia pestis bv. Antiqua (strain Angola).